The sequence spans 111 residues: Large ribosomal subunit protein uL22 (111 aa).

Belongs to the universal ribosomal protein uL22 family. Part of the 50S ribosomal subunit.

Its function is as follows. This protein binds specifically to 23S rRNA; its binding is stimulated by other ribosomal proteins, e.g. L4, L17, and L20. It is important during the early stages of 50S assembly. It makes multiple contacts with different domains of the 23S rRNA in the assembled 50S subunit and ribosome. The globular domain of the protein is located near the polypeptide exit tunnel on the outside of the subunit, while an extended beta-hairpin is found that lines the wall of the exit tunnel in the center of the 70S ribosome. This Francisella tularensis subsp. tularensis (strain FSC 198) protein is Large ribosomal subunit protein uL22.